Reading from the N-terminus, the 290-residue chain is uncharacterized protein (290 aa).

Transmembrane regions (helical) follow at residues 10–27, 32–54, 69–91, 100–117, and 121–143; these read FFVA…LLLI, VNYI…YFFS, ILVP…GVLI, VLAG…FFYF, and YLLM…NFEY. Residues 147-183 adopt a coiled-coil conformation; sequence VGKERKRILKLKKNYHKLLKEFSNFEREKRMFSNLRK.

Its subcellular location is the cell membrane. This is an uncharacterized protein from Aquifex aeolicus (strain VF5).